The chain runs to 42 residues: Alpha-conotoxin VnIB (42 aa).

The propeptide occupies 1-22 (ASDGRNAAADDKASDPIALTVR). Disulfide bonds link C25/C31 and C26/C38. G39 bears the Glycine amide mark.

It belongs to the conotoxin A superfamily. Expressed by the venom duct.

Its subcellular location is the secreted. In terms of biological role, alpha-conotoxins act on postsynaptic membranes, they bind to the nicotinic acetylcholine receptors (nAChR) and thus inhibit them. This toxin potently and selectively inhibits human and rat alpha-6-beta-4/CHRNA6-CHRNB4 nAChR (IC(50)=12 nM on rat nAChR). It exhibits rapid binding and unbinding at this receptor. It also shows activity on rat alpha-6-beta-4/CHRNA6-CHRNB4 (IC(50)=12 nM), human alpha-6/alpha-3-beta-4 (CHRNA6/CHRNA3-CHRNB4) (IC(50)=5.3 nM), rat alpha-6/alpha-3-beta-4 (CHRNA6/CHRNA3-CHRNB4) (IC(50)=18 nM), rat alpha-3-beta-4/CHRNA3-CHRNB4 (IC(50)=320 nM), and rat alpha-6/alpha-3-beta-2-beta-3 (CHRNA6/CHRNA3-CHRNB2-CHRNB3) (IC(50)=4 uM). This Conus ventricosus (Mediterranean cone) protein is Alpha-conotoxin VnIB.